Consider the following 310-residue polypeptide: N-acetylmuramic acid 6-phosphate etherase (310 aa).

Residues 64–227 (ITARLKSKGR…STSVMIKLGK (164 aa)) form the SIS domain. Glu92 serves as the catalytic Proton donor. Glu123 is a catalytic residue.

Belongs to the GCKR-like family. MurNAc-6-P etherase subfamily. Homodimer.

The catalysed reaction is N-acetyl-D-muramate 6-phosphate + H2O = N-acetyl-D-glucosamine 6-phosphate + (R)-lactate. The protein operates within amino-sugar metabolism; N-acetylmuramate degradation. In terms of biological role, specifically catalyzes the cleavage of the D-lactyl ether substituent of MurNAc 6-phosphate, producing GlcNAc 6-phosphate and D-lactate. In Prochlorococcus marinus (strain NATL1A), this protein is N-acetylmuramic acid 6-phosphate etherase.